The chain runs to 103 residues: Nucleoid-associated protein A2cp1_3777 (103 aa).

The protein belongs to the YbaB/EbfC family. Homodimer.

The protein resides in the cytoplasm. The protein localises to the nucleoid. In terms of biological role, binds to DNA and alters its conformation. May be involved in regulation of gene expression, nucleoid organization and DNA protection. The sequence is that of Nucleoid-associated protein A2cp1_3777 from Anaeromyxobacter dehalogenans (strain 2CP-1 / ATCC BAA-258).